The following is a 100-amino-acid chain: Large ribosomal subunit protein uL23 (100 aa).

This sequence belongs to the universal ribosomal protein uL23 family. As to quaternary structure, part of the 50S ribosomal subunit. Contacts protein L29, and trigger factor when it is bound to the ribosome.

Functionally, one of the early assembly proteins it binds 23S rRNA. One of the proteins that surrounds the polypeptide exit tunnel on the outside of the ribosome. Forms the main docking site for trigger factor binding to the ribosome. The polypeptide is Large ribosomal subunit protein uL23 (Vibrio vulnificus (strain CMCP6)).